The following is a 247-amino-acid chain: Triosephosphate isomerase (247 aa).

Asn-10 and Lys-12 together coordinate substrate. Residue His-94 is the Electrophile of the active site. The active-site Proton acceptor is the Glu-164.

This sequence belongs to the triosephosphate isomerase family. In terms of assembly, homodimer.

It is found in the cytoplasm. It catalyses the reaction D-glyceraldehyde 3-phosphate = dihydroxyacetone phosphate. The enzyme catalyses dihydroxyacetone phosphate = methylglyoxal + phosphate. The protein operates within carbohydrate biosynthesis; gluconeogenesis. It functions in the pathway carbohydrate degradation; glycolysis; D-glyceraldehyde 3-phosphate from glycerone phosphate: step 1/1. Its function is as follows. Triosephosphate isomerase is an extremely efficient metabolic enzyme that catalyzes the interconversion between dihydroxyacetone phosphate (DHAP) and D-glyceraldehyde-3-phosphate (G3P) in glycolysis and gluconeogenesis. In terms of biological role, it is also responsible for the non-negligible production of methylglyoxal a reactive cytotoxic side-product that modifies and can alter proteins, DNA and lipids. This Latimeria chalumnae (Coelacanth) protein is Triosephosphate isomerase.